Here is a 377-residue protein sequence, read N- to C-terminus: MAREQDSINSHPLDKYIDENSANESEIIKSSSQFSHEDQQKIDKLSKQIKPMDNDGLLNYGTEAQSNMSQFSHRILNEVKTTDVGPVGDSLNGLMSKLKSVNPEELNPENQSKLKRIFKRTKASVNEIFSKMQSVGSQIDRISIELDKHKNNLKKDIDMLDELYDMNKDYFDELSIYIEAAKHKQYVLQQDEIPKLREQAKSTGNQMDVQAASDMEQFVDRLDKRIYDLQLSRQIAIQTAPQIRMIQNVNQALAEKIQSSILTSIPLWKNQMSIALTLMRQRNAVSAQKAVTDTTNDLLLKNSELLKQNALATATENERGVVDIETLKTTQKDIIETIEQTLQIQEHGRTKRKQAESELNELETELQNQLLDMKENK.

Positions 1 to 18 are enriched in basic and acidic residues; it reads MAREQDSINSHPLDKYID. Residues 1 to 39 form a disordered region; the sequence is MAREQDSINSHPLDKYIDENSANESEIIKSSSQFSHEDQ. Residues 20-34 are compositionally biased toward polar residues; that stretch reads NSANESEIIKSSSQF.

The protein belongs to the TelA family.

The chain is TelA-like protein SSP1345 from Staphylococcus saprophyticus subsp. saprophyticus (strain ATCC 15305 / DSM 20229 / NCIMB 8711 / NCTC 7292 / S-41).